Here is a 33-residue protein sequence, read N- to C-terminus: Dermonecrotic toxin LbSicTox-alphaIB1b (33 aa).

H11 is a catalytic residue. Mg(2+) contacts are provided by E31 and D33.

Belongs to the arthropod phospholipase D family. Class II subfamily. Mg(2+) is required as a cofactor. In terms of processing, contains 2 disulfide bonds. Expressed by the venom gland.

Its subcellular location is the secreted. The enzyme catalyses an N-(acyl)-sphingosylphosphocholine = an N-(acyl)-sphingosyl-1,3-cyclic phosphate + choline. The catalysed reaction is an N-(acyl)-sphingosylphosphoethanolamine = an N-(acyl)-sphingosyl-1,3-cyclic phosphate + ethanolamine. It catalyses the reaction a 1-acyl-sn-glycero-3-phosphocholine = a 1-acyl-sn-glycero-2,3-cyclic phosphate + choline. It carries out the reaction a 1-acyl-sn-glycero-3-phosphoethanolamine = a 1-acyl-sn-glycero-2,3-cyclic phosphate + ethanolamine. Functionally, dermonecrotic toxins cleave the phosphodiester linkage between the phosphate and headgroup of certain phospholipids (sphingolipid and lysolipid substrates), forming an alcohol (often choline) and a cyclic phosphate. This toxin acts on sphingomyelin (SM) with high activity (9.5 U/mg). It may also act on ceramide phosphoethanolamine (CPE), lysophosphatidylcholine (LPC) and lysophosphatidylethanolamine (LPE), but not on lysophosphatidylserine (LPS), and lysophosphatidylglycerol (LPG). It acts by transphosphatidylation, releasing exclusively cyclic phosphate products as second products. Induces dermonecrosis, hemolysis, increased vascular permeability, edema, inflammatory response, and platelet aggregation. The sequence is that of Dermonecrotic toxin LbSicTox-alphaIB1b from Loxosceles boneti (North American fiddleback spider).